The following is a 570-amino-acid chain: Phytoene desaturase (570 aa).

The helical transmembrane segment at 547-567 (LFQGFLGALVAILLAYYYLVI) threads the bilayer.

It belongs to the carotenoid/retinoid oxidoreductase family. Requires NAD(+) as cofactor.

It localises to the membrane. The catalysed reaction is 15-cis-phytoene + A = all-trans-phytofluene + AH2. The enzyme catalyses all-trans-phytofluene + A = all-trans-zeta-carotene + AH2. It carries out the reaction all-trans-zeta-carotene + A = all-trans-neurosporene + AH2. It catalyses the reaction all-trans-neurosporene + A = all-trans-lycopene + AH2. Its pathway is carotenoid biosynthesis. Phytoene desaturase; part of the car gene cluster that mediates the biosynthesis of neurosporaxanthin, a carboxylic apocarotenoid acting as an essential protective pigments and leading to orange pigmentation. Converts phytoene into lycopene via the intermediates phytofluene, zeta-carotene and neurosporene; and further desaturates gamma-carotene into torulene. Neurosporaxanthin is synthesized from geranyl-geranyl pyrophosphate (GGPP) through several enzymatic activities. Phytoene synthase activity performed by the bifunctional enzyme carAR first produces phytoene from geranyl-geranyl pyrophosphate (GGPP). The phytoene dehydrogenase carB then introduces 4 desaturations to lead to lycopene which is substrate of the carotene cyclase activity of carAR that leads to the production of gamma-carotene. CarB then performs a 5th desaturation reaction to yield torulene. Torulene is the substrate of the dioxidase carT that breaks the molecule, removing five carbon atoms to yield beta-apo-4'-carotenal, whereas the aldehyde dehydrogenase carD mediates the last step by converting beta-apo-4'-carotenal into neurosporaxanthin. The protein is Phytoene desaturase of Fusarium fujikuroi (Bakanae and foot rot disease fungus).